The sequence spans 134 residues: ATP synthase epsilon chain (134 aa).

The protein belongs to the ATPase epsilon chain family. F-type ATPases have 2 components, CF(1) - the catalytic core - and CF(0) - the membrane proton channel. CF(1) has five subunits: alpha(3), beta(3), gamma(1), delta(1), epsilon(1). CF(0) has three main subunits: a, b and c.

The protein resides in the cell membrane. Produces ATP from ADP in the presence of a proton gradient across the membrane. This is ATP synthase epsilon chain from Carboxydothermus hydrogenoformans (strain ATCC BAA-161 / DSM 6008 / Z-2901).